The primary structure comprises 92 residues: Nodulation protein F (92 aa).

A Carrier domain is found at 4 to 88; that stretch reads QLTVEIIAAI…DVVEAVRGLI (85 aa). An O-(pantetheine 4'-phosphoryl)serine modification is found at Ser-45.

In terms of processing, 4'-phosphopantetheine is transferred from CoA to a specific serine of apo-NodF.

Functionally, proposed to synthesize nod factor fatty acyl chain. Involved in trans-2,trans-4,trans-6,cis-11-octadecatetraenoic acid biosynthesis. This Rhizobium leguminosarum bv. trifolii protein is Nodulation protein F (nodF).